A 76-amino-acid chain; its full sequence is Translational regulator CsrA (76 aa).

The protein belongs to the CsrA/RsmA family. In terms of assembly, homodimer; the beta-strands of each monomer intercalate to form a hydrophobic core, while the alpha-helices form wings that extend away from the core.

It is found in the cytoplasm. A translational regulator that binds mRNA to regulate translation initiation and/or mRNA stability. Usually binds in the 5'-UTR at or near the Shine-Dalgarno sequence preventing ribosome-binding, thus repressing translation. Its main target seems to be the major flagellin gene, while its function is anatagonized by FliW. The polypeptide is Translational regulator CsrA (Wolinella succinogenes (strain ATCC 29543 / DSM 1740 / CCUG 13145 / JCM 31913 / LMG 7466 / NCTC 11488 / FDC 602W) (Vibrio succinogenes)).